Consider the following 441-residue polypeptide: Damage-control phosphatase ARMT1 (441 aa).

Position 2 is an N-acetylalanine (alanine 2). Lysine 40 is subject to N6-acetyllysine. Serine 102 bears the Phosphoserine mark. Mn(2+) contacts are provided by aspartate 253 and asparagine 254. 253-254 contacts substrate; that stretch reads DN. S-adenosyl-L-methionine-binding residues include glutamate 258 and aspartate 291. Aspartate 291 is a binding site for Mn(2+). Residues 367 to 371 and lysine 404 contribute to the substrate site; that span reads DLNYR. Residues 401 to 404 carry the Subfamily III RTxK motif motif; the sequence is RTLK.

Belongs to the damage-control phosphatase family. Sugar phosphate phosphatase III subfamily. Requires Mn(2+) as cofactor. It depends on Ni(2+) as a cofactor. Automethylated.

The catalysed reaction is beta-D-fructose 1-phosphate + H2O = D-fructose + phosphate. It catalyses the reaction beta-D-fructose 6-phosphate = dihydroxyacetone + D-glyceraldehyde 3-phosphate. It carries out the reaction L-glutamyl-[protein] + S-adenosyl-L-methionine = [protein]-L-glutamate 5-O-methyl ester + S-adenosyl-L-homocysteine. Metal-dependent phosphatase that shows phosphatase activity against several substrates, including fructose-1-phosphate and fructose-6-phosphate. Its preference for fructose-1-phosphate, a strong glycating agent that causes DNA damage rather than a canonical yeast metabolite, suggests a damage-control function in hexose phosphate metabolism. Has also been shown to have O-methyltransferase activity that methylates glutamate residues of target proteins to form gamma-glutamyl methyl ester residues. Possibly methylates PCNA, suggesting it is involved in the DNA damage response. The protein is Damage-control phosphatase ARMT1 of Homo sapiens (Human).